The sequence spans 529 residues: MDAAALWQRYQDWLYYHEQLGIYVDISRMSFDDAFVERLEPKFVKAFKEMDALEAGAIANPDENRMVGHYWLRDSNLAPTPELKKEIITTLEKIEAFAADVHAGRIKPATAPRFTDVISIGIGGSSLGPQFVSQALAVLHPALELHFIDNTDPAGIDYILDRVQDRLDTTLVVTISKSGGTPETRNGMLEAKNRFKNLGLDFPKHAVAVTGYGSKLAQIAEEEGWLAMLPMHDWVGGRTSELSAVGLVPASLQGIAIREMLAGAKAMDEATRVHDLKTNPAALLALSWYFAGEGAGKKDMVILPYKDSLMLFSRYLQQLVMESLGKEKDLDDKIVHQGIAVYGNKGSTDQHAYVQELREGIPNFFLTFIEVLKDRDGTRFEVEPGVTSGDYLSGFLLGTREALYEKRRDSITVTLPEVTSKQVGALIALYERAVGLYASLINVNAYHQPGVEAGKKAATDTIALQNKIVQILRNTLTPLPITSLADKAEAPDKIETVYKIVRHLAANKRGVELYGNPAEPGSLQVTLKG.

The active-site Proton donor is the E322. Residues H351 and K455 contribute to the active site.

It belongs to the GPI family.

The protein resides in the cytoplasm. The enzyme catalyses alpha-D-glucose 6-phosphate = beta-D-fructose 6-phosphate. The protein operates within carbohydrate biosynthesis; gluconeogenesis. It participates in carbohydrate degradation; glycolysis; D-glyceraldehyde 3-phosphate and glycerone phosphate from D-glucose: step 2/4. Catalyzes the reversible isomerization of glucose-6-phosphate to fructose-6-phosphate. In Acaryochloris marina (strain MBIC 11017), this protein is Glucose-6-phosphate isomerase.